The following is a 536-amino-acid chain: Sensory rhodopsin I transducer (536 aa).

The Cytoplasmic portion of the chain corresponds to 2–14 (TIAWARRRYGVKL). A helical membrane pass occupies residues 15–29 (GLGYIATAGLLVGVG). Residues 30–39 (VTTNDVPSTI) lie on the Extracellular side of the membrane. The chain crosses the membrane as a helical span at residues 40 to 55 (VAGIAGLLTLGSINAA). The region spanning 55–107 (AETVASIKEIAAQTERVANGNLEQEVTSTRTDEFGSLADSIEQMRQSLRGRLN) is the HAMP 1 domain. Over 56-536 (ETVASIKEIA…MRAGADGGGA (481 aa)) the chain is Cytoplasmic. The tract at residues 116–145 (LEETQAEAETAREEAEQAKQEAQAAEREAR) is disordered. A compositionally biased stretch (basic and acidic residues) spans 124–145 (ETAREEAEQAKQEAQAAEREAR). The HAMP 2 domain occupies 149–202 (ATYQDTAKRYGETMEAAATGDLTQRVDVDTDHEAMETVGTAFNQMMDDLQATVR). The region spanning 221–459 (TSADIEASAG…STATSVERVA (239 aa)) is the Methyl-accepting transducer domain. Glutamate 266 is modified (glutamate methyl ester (Glu)). The tract at residues 278-307 (SEDVATASDAARDSSKSALDEMSSIETEVD) is disordered. Positions 287-296 (AARDSSKSAL) are enriched in basic and acidic residues. Glutamate methyl ester (Glu) is present on glutamate 473. A disordered region spans residues 512-536 (TEDSETAGGSVEQPVMRAGADGGGA).

It belongs to the methyl-accepting chemotaxis (MCP) protein family. Methylated by CheR.

It localises to the cell membrane. In terms of biological role, transduces signals from the phototaxis receptor sensory rhodopsin I (SR-I) to the flagellar motor. Responds to light changes through the variation of the level of methylation. This chain is Sensory rhodopsin I transducer (htr1), found in Halobacterium salinarum (strain ATCC 29341 / DSM 671 / R1).